The primary structure comprises 256 residues: Floral homeotic protein APETALA 1-2 (256 aa).

An MADS-box domain is found at Met-1–Ser-61. In terms of domain architecture, K-box spans Asn-88–Val-178. The tract at residues Asp-187–Ile-206 is disordered.

In terms of assembly, homodimer capable of binding to CArG-box sequences.

It localises to the nucleus. Transcription factor that promotes early floral meristem identity in synergy with LEAFY. Displays a redundant function with CAULIFLOWER in the up-regulation of LEAFY. Required subsequently for the transition of an inflorescence meristem into a floral meristem, and for the normal development of sepals and petals in flowers. Regulates positively B class homeotic proteins. The sequence is that of Floral homeotic protein APETALA 1-2 (2AP1) from Brassica oleracea var. italica (Broccoli).